Here is a 493-residue protein sequence, read N- to C-terminus: MSELTALTIAEARDKLKAKAITATELTDAYLSAIDAANDAINAYVAVTHDQARSMAKASDERIAKGEAGALEGIPLGVKDLFATKGVHTQACSHILDGFKPEYESTVTANLWADGAVMLGKLNMDEFAMGSSNETSYYGPVKNPWRAKGSNADLVPGGSSGGSAAAVAAHLCAGATATDTGGSIRQPAAFTGTVGIKPTYGRVSRWGTVAFASSLDQAGPIARDVRDAAILMKSMASLDLKDTTSVDLPVPDYEAALGRSVKGMKIGIPREYRVDGMPGEIEELWQKGIQYLKDAGAEIVDISLPHTKYALPAYYIVAPAEASSNLARYDGVRYGLRVPGKDIADMYEQTRAAGFGKEVKRRIMIGTYVLSAGYYDAYYLRAQKVRTLIKKDFEDVFAKGVDAILTPATPSAAFGLADEVLANDPVKMYLNDIFTVTVNMAGLPGIAVPGGLNGQGLPLGLQLIGRPFEEETLFQAAHVIEQAAGRFTPAKWW.

Residues Lys-79 and Ser-159 each act as charge relay system in the active site. The active-site Acyl-ester intermediate is the Ser-183.

The protein belongs to the amidase family. GatA subfamily. Heterotrimer of A, B and C subunits.

The enzyme catalyses L-glutamyl-tRNA(Gln) + L-glutamine + ATP + H2O = L-glutaminyl-tRNA(Gln) + L-glutamate + ADP + phosphate + H(+). In terms of biological role, allows the formation of correctly charged Gln-tRNA(Gln) through the transamidation of misacylated Glu-tRNA(Gln) in organisms which lack glutaminyl-tRNA synthetase. The reaction takes place in the presence of glutamine and ATP through an activated gamma-phospho-Glu-tRNA(Gln). The sequence is that of Glutamyl-tRNA(Gln) amidotransferase subunit A from Brucella suis biovar 1 (strain 1330).